A 71-amino-acid chain; its full sequence is Translational regulator CsrA (71 aa).

The protein belongs to the CsrA/RsmA family. Homodimer; the beta-strands of each monomer intercalate to form a hydrophobic core, while the alpha-helices form wings that extend away from the core.

The protein resides in the cytoplasm. Its function is as follows. A key translational regulator that binds mRNA to regulate translation initiation and/or mRNA stability. Mediates global changes in gene expression, shifting from rapid growth to stress survival by linking envelope stress, the stringent response and the catabolite repression systems. Usually binds in the 5'-UTR; binding at or near the Shine-Dalgarno sequence prevents ribosome-binding, repressing translation, binding elsewhere in the 5'-UTR can activate translation and/or stabilize the mRNA. Its function is antagonized by small RNA(s). This Pseudoalteromonas atlantica (strain T6c / ATCC BAA-1087) protein is Translational regulator CsrA.